Reading from the N-terminus, the 234-residue chain is Orotidine 5'-phosphate decarboxylase (234 aa).

Residues D10, K32, 59-68 (DLKLHDIPTT), T122, R184, Q193, G213, and R214 each bind substrate. K61 (proton donor) is an active-site residue.

The protein belongs to the OMP decarboxylase family. Type 1 subfamily. In terms of assembly, homodimer.

It catalyses the reaction orotidine 5'-phosphate + H(+) = UMP + CO2. Its pathway is pyrimidine metabolism; UMP biosynthesis via de novo pathway; UMP from orotate: step 2/2. In terms of biological role, catalyzes the decarboxylation of orotidine 5'-monophosphate (OMP) to uridine 5'-monophosphate (UMP). The sequence is that of Orotidine 5'-phosphate decarboxylase from Bacillus pumilus (strain SAFR-032).